We begin with the raw amino-acid sequence, 481 residues long: MQEIYRFIDDAIEADRQRYTDIADQIWDHPETRFEEFWSAEHLASALESAGFTVTRNVGNIPNAFIASFGQGKPVIALLGEYDALAGLSQQAGCAQPTSVTPGENGHGCGHNLLGTAAFAAAIAVKKWLEQYGQGGTVRFYGCPGEEGGSGKTFMVREGVFDDVDAALTWHPEAFAGMFNTRTLANIQASWRFKGIAAHAANSPHLGRSALDAVTLMTTGTNFLNEHIIEKARVHYAITNSGGISPNVVQAQAEVLYLIRAPEMTDVQHIYDRVAKIAEGAALMTETTVECRFDKACSSYLPNRTLENAMYQALSHFGTPEWNSEELAFAKQIQATLTSNDRQNSLNNIAATGGENGKVFALRHRETVLANEVAPYAATDNVLAASTDVGDVSWKLPVAQCFSPCFAVGTPLHTWQLVSQGRTSIAHKGMLLAAKTMAATTVNLFLDSGLLQECQQEHQQVTDTQPYHCPIPKNVTPSPLK.

In terms of assembly, forms a heterodimer with AbgA. The cofactor is Mn(2+).

In terms of biological role, component of the p-aminobenzoyl-glutamate hydrolase multicomponent enzyme system which catalyzes the cleavage of p-aminobenzoyl-glutamate (PABA-GLU) to form p-aminobenzoate (PABA) and glutamate. AbgAB does not degrade dipeptides and the physiological role of abgABT should be clarified. In Escherichia coli (strain K12), this protein is p-aminobenzoyl-glutamate hydrolase subunit B (abgB).